The chain runs to 1982 residues: MAADDDNGDGTSLFDVFSASPLKNNDEGSLDIYAGLDSAVSDSASKSCVPSRNCLDLYEEILTEEGTAKEATYNDLQVEYGKCQLQMKELMKKFKEIQTQNFSLINENQSLKKNISALIKTARVEINRKDEEISNLHQRLSEFPHFRNNHKTARTFDTVKTKDLKSRSPHLDDCSKTDHRAKSDVSKDVHHSTSLPNLEKEGKPHSDKRSTSHLPTSVEKHCTNGVWSRSHYQVGEGSSNEDSRRGRKDIRHSQFNRGTERVRKDLSTGCGDGEPRILEASQRLQGHPEKYGKGEPKTESKSSKFKSNSDSDYKGERINSSWEKETPGERSHSRVDSQSDKKLERQSERSQNINRKEVKSQDKEERKVDQKPKSVVKDQDHWRRSERASLPHSKNEITFSHNSSKYHLEERRGWEDCKRDKSVNSHSFQDGRCPSSLSNSRTHKNIDSKEVDAMHQWENTPLKAERHRTEDKRKREQESKEENRHIRNEKRVPTEHLQKTNKETKKTTTDLKKQNEPKTDKGEVLDNGVSEGADNKELAMKAESGPNETKNKDLKLSFMKKLNLTLSPAKKQPVSQDNQHKITDIPKSSGVCDSESSMQVKTVAYVPSISEHILGEAAVSEHTMGETKSTLLEPKVALLAVTEPRIGISETNKEDENSLLVRSVDNTMHCEEPICGTETSFPSPMEIQQTESLFPSTGMKQTINNGRAAAPVVMDVLQTDVSQNFGLELDTKRNDNSDYCGISEGMEMKVALSTTVSETTESILQPSIEEADILPIMLSEDNNPKFEPSVIVTPLVESKSCHLEPCLPKETLDSSLQQTELMDHRMATGETNSVYHDDDNSVLSIDLNHLRPIPEAISPLNSPVRPVAKVLRNESPPQVPVYNNSHKDVFLPNSAHSTSKSQSDLNKENQKPIYKSDKCTEADTCKNSPLDELEEGEIRSDSETSKPQESFEKNSKRRVSADVRKSKTIPRRGKSTVCLDKDSRKTHVRIHQTNNKWNKRPDKSSRSSKTEKKDKVMSTSSLEKIVPIIAVPSSEQEIMHMLRMIRKHVRKNYMKFKAKFSLIQFHRIIESAILSFTSLIKHLNLHKISKSVTTLQKNLCDIIESKLKQVKKNGIVDRLFEQQLPDMKKKLWKFVDDQLDYLFAKLKKILVCDSKSFGRDSDEGKLEKTSKQNAQYSNSQKRSVDNSNRELLKEKLSKSEDPVHYKSLVGCKKSEENYQDQNNSSINTVKHDIKKNFNICFDNIKNSQSEERSLEVHCPSTPKSEKNEGSSIEDAQTSQHATLKPERSFEILTEQQASSLTFNLVSDAQMGEIFKSLLQGSDLLDSSVNCTEKSEWELKTPEKQLLETLKCESIPACTTEELVSGVASPCPKMISDDNWSLLSSEKGPSLSSGLSLPVHPDVLDESCMFEVSTNLPLSKDNVCSVEKSKPCVSSILLEDLAVSLTVPSPLKSDGHLSFLKPDMSSSSTPEEVISAHFSEDALLEEEDASEQDIHLALESDNSSSKSSCSSSWTSRSVAPGFQYHPNLPMHAVIMEKSNDHFIVKIRRATPSTSSGLKQSMMPDELLTSLPRHGKEADEGPEKEYISCQNTVFKSVEELENSNKNVDGSKSTHEEQSSMIQTQVPDIYEFLKDASDKMGHSDEVADECFKLHQVWETKVPESIEELPSMEEISHSVGEHLPNTYVDLTKDPVTETKNLGEFIEVTVLHIDQLGCSGGNLNQSAQILDNSLQADTVGAFIDLTQDASSEAKSEGNHPALAVEDLGCGVIQVDEDNCKEEKAQVANRPLKCIVEETYIDLTTESPSSCEVKKDELKSEPGSNCDNSELPGTLHNSHKKRRNISDLNHPHKKQRKETDLTNKEKTKKPTQDSCENTEAHQKKASKKKAPPVTKDPSSLKATPGIKDSSAALATSTSLSAKNVIKKKGEIIILWTRNDDREILLECQKRGPSFKTFAYLAAKLDKNPNQVSERFQQLMKLFEKSKCR.

Ala-2 carries the N-acetylalanine modification. Ser-20 is modified (phosphoserine). A compositionally biased stretch (basic and acidic residues) spans 159–191 (VKTKDLKSRSPHLDDCSKTDHRAKSDVSKDVHH). The segment at 159–552 (VKTKDLKSRS…ESGPNETKNK (394 aa)) is disordered. Phosphoserine is present on Ser-194. Basic and acidic residues predominate over residues 198 to 210 (LEKEGKPHSDKRS). Residues 225 to 240 (GVWSRSHYQVGEGSSN) show a composition bias toward polar residues. Positions 286–395 (GHPEKYGKGE…ERASLPHSKN (110 aa)) are enriched in basic and acidic residues. Residues 396–405 (EITFSHNSSK) show a composition bias toward polar residues. Composition is skewed to basic and acidic residues over residues 406–423 (YHLE…DKSV), 444–455 (KNIDSKEVDAMH), and 463–524 (KAER…KGEV). Ser-567 bears the Phosphoserine mark. A disordered region spans residues 569 to 593 (AKKQPVSQDNQHKITDIPKSSGVCD). Residues Ser-658, Ser-815, and Ser-875 each carry the phosphoserine modification. Disordered regions lie at residues 875 to 1017 (SPPQ…DKVM), 1157 to 1188 (FGRD…DNSN), and 1251 to 1283 (ERSL…HATL). Positions 894–904 (SAHSTSKSQSD) are enriched in polar residues. Basic and acidic residues-rich tracts occupy residues 905-924 (LNKE…EADT), 936-965 (GEIR…DVRK), 999-1016 (KRPD…KDKV), and 1157-1170 (FGRD…EKTS). The residue at position 940 (Ser-940) is a Phosphoserine. Phosphoserine is present on Ser-1161. Composition is skewed to polar residues over residues 1171 to 1181 (KQNAQYSNSQK) and 1269 to 1281 (GSSI…SQHA). Lys-1343 carries the N6-acetyllysine modification. The SUMO interaction motif 1 (SIM); mediates the binding to polysumoylated substrates motif lies at 1683–1687 (YVDLT). The segment at 1709–1982 (DQLGCSGGNL…MKLFEKSKCR (274 aa)) is NCOA2-binding. The SUMO interaction motif 2 (SIM); mediates the binding to polysumoylated substrates motif lies at 1737-1741 (FIDLT). Residues 1794-1798 (YIDLT) carry the SUMO interaction motif 3 (SIM); mediates the binding to polysumoylated substrates motif. The interval 1803–1909 (SSCEVKKDEL…IKDSSAALAT (107 aa)) is disordered. Positions 1851 to 1865 (KETDLTNKEKTKKPT) are enriched in basic and acidic residues.

Self-associates. Component of the death-inducing signaling complex (DISC) with CASP8, FADD and FAS. Interacts with NCOA2 and NCOA3. Interacts with SRRT. Interacts with TRAF2. Interacts with NPAT. Interacts (via SIM domains) with SUMO1 and SUMO2. Interacts with SP100; may negatively regulate CASP8AP2 export from the nucleus to the cytoplasm.

The protein resides in the cytoplasm. Its subcellular location is the nucleus. It localises to the PML body. The protein localises to the mitochondrion. In terms of biological role, participates in TNF-alpha-induced blockade of glucocorticoid receptor (GR) transactivation at the nuclear receptor coactivator level, upstream and independently of NF-kappa-B. Suppresses both NCOA2- and NCOA3-induced enhancement of GR transactivation. Involved in TNF-alpha-induced activation of NF-kappa-B via a TRAF2-dependent pathway. Acts as a downstream mediator for CASP8-induced activation of NF-kappa-B. Required for the activation of CASP8 in FAS-mediated apoptosis. Required for histone gene transcription and progression through S phase. This Homo sapiens (Human) protein is CASP8-associated protein 2.